Consider the following 306-residue polypeptide: Recombination-associated protein RdgC (306 aa).

The protein belongs to the RdgC family.

The protein resides in the cytoplasm. It is found in the nucleoid. May be involved in recombination. The sequence is that of Recombination-associated protein RdgC from Pseudomonas entomophila (strain L48).